The primary structure comprises 523 residues: Probable FAD synthase (523 aa).

Residues 20–111 (AIVVIGDEIL…TDQLHFSDEI (92 aa)) are molybdenum cofactor biosynthesis protein-like. An FAD synthase region spans residues 332–489 (QIALSFNGGK…SLGGRDNTVK (158 aa)).

The protein in the N-terminal section; belongs to the MoaB/Mog family. It in the C-terminal section; belongs to the PAPS reductase family. FAD1 subfamily. Mg(2+) is required as a cofactor.

It catalyses the reaction FMN + ATP + H(+) = FAD + diphosphate. It functions in the pathway cofactor biosynthesis; FAD biosynthesis; FAD from FMN: step 1/1. In terms of biological role, catalyzes the adenylation of flavin mononucleotide (FMN) to form flavin adenine dinucleotide (FAD) coenzyme. This Caenorhabditis briggsae protein is Probable FAD synthase.